The following is a 253-amino-acid chain: Imidazole glycerol phosphate synthase subunit HisF (253 aa).

Catalysis depends on residues Asp-11 and Asp-130.

The protein belongs to the HisA/HisF family. In terms of assembly, heterodimer of HisH and HisF.

Its subcellular location is the cytoplasm. The enzyme catalyses 5-[(5-phospho-1-deoxy-D-ribulos-1-ylimino)methylamino]-1-(5-phospho-beta-D-ribosyl)imidazole-4-carboxamide + L-glutamine = D-erythro-1-(imidazol-4-yl)glycerol 3-phosphate + 5-amino-1-(5-phospho-beta-D-ribosyl)imidazole-4-carboxamide + L-glutamate + H(+). Its pathway is amino-acid biosynthesis; L-histidine biosynthesis; L-histidine from 5-phospho-alpha-D-ribose 1-diphosphate: step 5/9. IGPS catalyzes the conversion of PRFAR and glutamine to IGP, AICAR and glutamate. The HisF subunit catalyzes the cyclization activity that produces IGP and AICAR from PRFAR using the ammonia provided by the HisH subunit. The sequence is that of Imidazole glycerol phosphate synthase subunit HisF from Thermotoga sp. (strain RQ2).